A 159-amino-acid polypeptide reads, in one-letter code: Phosphopantetheine adenylyltransferase (159 aa).

T10 provides a ligand contact to substrate. Residues 10–11 and H18 each bind ATP; that span reads TF. Residues K42, L74, and R88 each contribute to the substrate site. Residues 89-91, E99, and 124-130 contribute to the ATP site; these read GLR and NSFISST.

Belongs to the bacterial CoaD family. In terms of assembly, homohexamer. It depends on Mg(2+) as a cofactor.

It is found in the cytoplasm. It catalyses the reaction (R)-4'-phosphopantetheine + ATP + H(+) = 3'-dephospho-CoA + diphosphate. The protein operates within cofactor biosynthesis; coenzyme A biosynthesis; CoA from (R)-pantothenate: step 4/5. Reversibly transfers an adenylyl group from ATP to 4'-phosphopantetheine, yielding dephospho-CoA (dPCoA) and pyrophosphate. The polypeptide is Phosphopantetheine adenylyltransferase (Shewanella pealeana (strain ATCC 700345 / ANG-SQ1)).